Here is a 431-residue protein sequence, read N- to C-terminus: MSISEMAFQVKEASIRLAAAGTELKNKALENIARLLMERKDEIIKANNEDLQRSREEKLAEPLLKRLKFDEAKIVDVIDGINSLIKLEDPVGKTLLSTELDEGLELYRVTCPIGVVGIIFESRPDALVQISTLCLKSGNGVLLKGGSEARETNKILAQIITEATEEVGIPPNWIKLLETRADVNEMLKMDKYIDLIIPRGSNEFVRYIMDNSRIPVMGHADGICHCYIDEDADIDMAIRIVVDSKTQYVAVCNATETLLVHKNIAPKVLPELKRALDSKNVELVGCSETQKIIPVAPATEEDWRTEYLDYKLSVKVVGDLEEAIEHINTYGSGHTDSIITNSKEKAAAFMSLVDSGNVFWNCSTRFSDGFRYGFGAEVGISTSKIHARGPVGLDGLLIYKYKLIGNGHIVEDYAKRTKSFKHNKMNKQFPL.

It belongs to the gamma-glutamyl phosphate reductase family.

The protein resides in the cytoplasm. The catalysed reaction is L-glutamate 5-semialdehyde + phosphate + NADP(+) = L-glutamyl 5-phosphate + NADPH + H(+). It participates in amino-acid biosynthesis; L-proline biosynthesis; L-glutamate 5-semialdehyde from L-glutamate: step 2/2. Catalyzes the NADPH-dependent reduction of L-glutamate 5-phosphate into L-glutamate 5-semialdehyde and phosphate. The product spontaneously undergoes cyclization to form 1-pyrroline-5-carboxylate. The polypeptide is Gamma-glutamyl phosphate reductase (Acetivibrio thermocellus (strain ATCC 27405 / DSM 1237 / JCM 9322 / NBRC 103400 / NCIMB 10682 / NRRL B-4536 / VPI 7372) (Clostridium thermocellum)).